A 652-amino-acid polypeptide reads, in one-letter code: Proline-rich receptor-like protein kinase PERK1 (652 aa).

Positions methionine 1–serine 137 are disordered. Topologically, residues methionine 1–glycine 139 are extracellular. Over residues glycine 8–proline 19 the composition is skewed to pro residues. Residues asparagine 21 and asparagine 50 are each glycosylated (N-linked (GlcNAc...) asparagine). Residues threonine 26 to threonine 112 show a composition bias toward pro residues. The span at proline 113–serine 137 shows a compositional bias: low complexity. The helical transmembrane segment at valine 140 to leucine 160 threads the bilayer. The Cytoplasmic segment spans residues leucine 161–leucine 652. Residues arginine 169–valine 251 are disordered. Over residues asparagine 203–valine 213 the composition is skewed to polar residues. The span at leucine 216–alanine 236 shows a compositional bias: pro residues. Threonine 269 carries the post-translational modification Phosphothreonine. Positions phenylalanine 280–leucine 559 constitute a Protein kinase domain. Residues leucine 286 to valine 294 and lysine 308 contribute to the ATP site. At tyrosine 353 the chain carries Phosphotyrosine. The active-site Proton acceptor is aspartate 404. Residues serine 408 and serine 437 each carry the phosphoserine modification. 2 positions are modified to phosphothreonine: threonine 438 and threonine 443. Tyrosine 451 carries the post-translational modification Phosphotyrosine. Over residues tyrosine 605–serine 616 the composition is skewed to polar residues. A disordered region spans residues tyrosine 605 to leucine 652.

It belongs to the protein kinase superfamily. Ser/Thr protein kinase family. In terms of tissue distribution, mostly expressed in inflorescence bolt, flower buds and siliques, and, to a lower extent, in roots, seedlings and leaves.

Its subcellular location is the cell membrane. It carries out the reaction L-seryl-[protein] + ATP = O-phospho-L-seryl-[protein] + ADP + H(+). The catalysed reaction is L-threonyl-[protein] + ATP = O-phospho-L-threonyl-[protein] + ADP + H(+). The polypeptide is Proline-rich receptor-like protein kinase PERK1 (PERK1) (Arabidopsis thaliana (Mouse-ear cress)).